A 310-amino-acid polypeptide reads, in one-letter code: N-acetyl-gamma-glutamyl-phosphate reductase (310 aa).

C117 is a catalytic residue.

This sequence belongs to the NAGSA dehydrogenase family. Type 2 subfamily.

The protein localises to the cytoplasm. It catalyses the reaction N-acetyl-L-glutamate 5-semialdehyde + phosphate + NADP(+) = N-acetyl-L-glutamyl 5-phosphate + NADPH + H(+). The protein operates within amino-acid biosynthesis; L-arginine biosynthesis; N(2)-acetyl-L-ornithine from L-glutamate: step 3/4. Its function is as follows. Catalyzes the NADPH-dependent reduction of N-acetyl-5-glutamyl phosphate to yield N-acetyl-L-glutamate 5-semialdehyde. In Rhizobium etli (strain CIAT 652), this protein is N-acetyl-gamma-glutamyl-phosphate reductase.